A 247-amino-acid polypeptide reads, in one-letter code: Neurotrophic factor BDNF precursor form (247 aa).

Residues 1–18 (MTILFLTMVISYFGCMKA) form the signal peptide. Residues 19 to 128 (APMKEANVRG…AANMSMRVRR (110 aa)) constitute a propeptide that is removed on maturation. Asn-121 carries an N-linked (GlcNAc...) asparagine glycan. 3 cysteine pairs are disulfide-bonded: Cys-141–Cys-208, Cys-186–Cys-237, and Cys-196–Cys-239.

It belongs to the NGF-beta family. In terms of assembly, monomers and homodimers. Binds to NTRK2/TRKB. Can form heterodimers with other neurotrophin family members, such as NTF3 and NTF4 (in vitro), but the physiological relevance of this is not clear. BDNF precursor form: interacts with the heterodimer formed by NGFR and SORCS2. Mature BDNF has much lower affinity for the heterodimer formed by NGFR and SORCS2. Post-translationally, N-glycosylated and glycosulfated, contrary to mature BDNF. Mature BDNF is produced by proteolytic removal of the propeptide, catalyzed by a FURIN family member. In addition, the precursor form is proteolytically cleaved within the propeptide, but this is not an obligatory intermediate for the production of mature BDNF. Can be converted into mature BDNF by plasmin (PLG).

Its subcellular location is the secreted. In terms of biological role, important signaling molecule that activates signaling cascades downstream of NTRK2. During development, promotes the survival and differentiation of selected neuronal populations of the peripheral and central nervous systems. Participates in axonal growth, pathfinding and in the modulation of dendritic growth and morphology. Major regulator of synaptic transmission and plasticity at adult synapses in many regions of the CNS. The versatility of BDNF is emphasized by its contribution to a range of adaptive neuronal responses including long-term potentiation (LTP), long-term depression (LTD), certain forms of short-term synaptic plasticity, as well as homeostatic regulation of intrinsic neuronal excitability. Important signaling molecule that activates signaling cascades downstream of NTRK2. Activates signaling cascades via the heterodimeric receptor formed by NGFR and SORCS2. Signaling via NGFR and SORCS2 plays a role in synaptic plasticity and long-term depression (LTD). Binding to NGFR and SORCS2 promotes neuronal apoptosis. Promotes neuronal growth cone collapse. The polypeptide is Neurotrophic factor BDNF precursor form (BDNF) (Helarctos malayanus (Malayan sun bear)).